The primary structure comprises 1184 residues: Calcium-activated potassium channel subunit alpha-1a (1184 aa).

At 1 to 39 (MSNNINFNKNPDSSVSISKMDVIIPFTPDVPCDNNGQRM) the chain is on the extracellular side. The helical transmembrane segment at 40–60 (WWAFLASSMVTFFGGLFIILL) threads the bilayer. The Cytoplasmic segment spans residues 61-132 (WRTLKYLWTV…MISAQTLTGR (72 aa)). S-palmitoyl cysteine attachment occurs at residues Cys-71, Cys-72, and Cys-74. The chain crosses the membrane as a helical span at residues 133-153 (VLVVLVFALSIGALGIYFIDS). The Extracellular portion of the chain corresponds to 154–168 (SDPIESCQNFYKDFT). The helical transmembrane segment at 169–189 (LQIDMAFNVFFLLYFGLRFIA) threads the bilayer. Residues 190–193 (ANDK) are Cytoplasmic-facing. A helical transmembrane segment spans residues 194-214 (LWFWLEVNSVVDFFTVPPVFV). The Extracellular portion of the chain corresponds to 215–254 (SVYLNRSWLGLRFLRALRLIQFSEILQFLNILKTSNSIKL). Residues 255–275 (VNLCSIFISTWLTAAGFIHLV) form a helical membrane-spanning segment. Residues 276-289 (ENSGDPWENFQNSQ) are Cytoplasmic-facing. A helical transmembrane segment spans residues 290-310 (PLSYWECVYLLMVTMSTVGYG). Topologically, residues 311–321 (DVYARTTLGRL) are extracellular. A helical transmembrane segment spans residues 322 to 342 (FMVFFILGGLAMFASYVPEII). Residues 343 to 1184 (ELIGNRKKYG…PPIREVEDEC (842 aa)) are Cytoplasmic-facing. One can recognise an RCK N-terminal 1 domain in the interval 361-503 (RKHIVVCGHI…WNWKEGDDAI (143 aa)). The Mg(2+) site is built by Glu-393, Gln-416, and Glu-418. Position 468 (Asn-468) interacts with Ca(2+). The disordered stretch occupies residues 655–677 (EHPSTLSPKKKQRNGGMRNSPNC). A Phosphothreonine modification is found at Thr-659. A phosphoserine mark is found at Ser-661, Ser-674, and Ser-678. The RCK N-terminal 2 domain maps to 735-879 (SGHVVVCIFG…MDRSSPDNSP (145 aa)). Thr-866 bears the Phosphothreonine mark. Ser-874 and Ser-878 each carry phosphoserine. Positions 908, 911, 914, and 916 each coordinate Ca(2+). The Calcium bowl motif lies at 908–916 (QFLDQDDDD). Residues 1082 to 1143 (RASLSHSSHS…PEKRWFTDEA (62 aa)) are disordered. Low complexity predominate over residues 1084-1104 (SLSHSSHSSHSSSKKSSSVHS). Positions 1116–1125 (KAREARDKQN) are enriched in basic and acidic residues.

The protein belongs to the potassium channel family. Calcium-activated (TC 1.A.1.3) subfamily. KCa1.1/KCNMA1 sub-subfamily. Homotetramer; which constitutes the calcium-activated potassium channel. Post-translationally, phosphorylated. Palmitoylated.

It localises to the cell membrane. It catalyses the reaction K(+)(in) = K(+)(out). Potassium channel activated by both membrane depolarization or increase in cytosolic Ca(2+) that mediates export of K(+). It is also activated by the concentration of cytosolic Mg(2+). Its activation dampens the excitatory events that elevate the cytosolic Ca(2+) concentration and/or depolarize the cell membrane. It therefore contributes to repolarization of the membrane potential. Involved in determining peripheral auditory sensitivity. This is Calcium-activated potassium channel subunit alpha-1a from Danio rerio (Zebrafish).